Here is a 312-residue protein sequence, read N- to C-terminus: Gamma-soluble NSF attachment protein (312 aa).

The disordered stretch occupies residues 281–312 (KKKAAAPPQAKPEGTAAPAAEEEEDEYAGGLC). The span at 285–299 (AAPPQAKPEGTAAPA) shows a compositional bias: low complexity. A compositionally biased stretch (acidic residues) spans 300-312 (AEEEEDEYAGGLC).

It belongs to the SNAP family. Interacts with RAB11FIP5. Interacts with VTI1A.

Its subcellular location is the membrane. The protein localises to the golgi apparatus. Functionally, required for vesicular transport between the endoplasmic reticulum and the Golgi apparatus. The sequence is that of Gamma-soluble NSF attachment protein from Bos taurus (Bovine).